A 249-amino-acid polypeptide reads, in one-letter code: Imidazole glycerol phosphate synthase subunit HisF (249 aa).

Active-site residues include Asp11 and Asp130.

The protein belongs to the HisA/HisF family. As to quaternary structure, heterodimer of HisH and HisF.

The protein resides in the cytoplasm. It carries out the reaction 5-[(5-phospho-1-deoxy-D-ribulos-1-ylimino)methylamino]-1-(5-phospho-beta-D-ribosyl)imidazole-4-carboxamide + L-glutamine = D-erythro-1-(imidazol-4-yl)glycerol 3-phosphate + 5-amino-1-(5-phospho-beta-D-ribosyl)imidazole-4-carboxamide + L-glutamate + H(+). It participates in amino-acid biosynthesis; L-histidine biosynthesis; L-histidine from 5-phospho-alpha-D-ribose 1-diphosphate: step 5/9. IGPS catalyzes the conversion of PRFAR and glutamine to IGP, AICAR and glutamate. The HisF subunit catalyzes the cyclization activity that produces IGP and AICAR from PRFAR using the ammonia provided by the HisH subunit. This is Imidazole glycerol phosphate synthase subunit HisF from Sulfolobus acidocaldarius (strain ATCC 33909 / DSM 639 / JCM 8929 / NBRC 15157 / NCIMB 11770).